A 475-amino-acid polypeptide reads, in one-letter code: Ribulose bisphosphate carboxylase large chain (475 aa).

The residue at position 14 (Lys-14) is an N6,N6,N6-trimethyllysine. Residues Asn-123 and Thr-173 each coordinate substrate. Lys-175 functions as the Proton acceptor in the catalytic mechanism. Lys-177 contacts substrate. Lys-201, Asp-203, and Glu-204 together coordinate Mg(2+). Lys-201 carries the N6-carboxylysine modification. His-294 serves as the catalytic Proton acceptor. Residues Arg-295, His-327, and Ser-379 each coordinate substrate.

Belongs to the RuBisCO large chain family. Type I subfamily. As to quaternary structure, heterohexadecamer of 8 large chains and 8 small chains; disulfide-linked. The disulfide link is formed within the large subunit homodimers. The cofactor is Mg(2+). In terms of processing, the disulfide bond which can form in the large chain dimeric partners within the hexadecamer appears to be associated with oxidative stress and protein turnover.

It is found in the plastid. It carries out the reaction 2 (2R)-3-phosphoglycerate + 2 H(+) = D-ribulose 1,5-bisphosphate + CO2 + H2O. The enzyme catalyses D-ribulose 1,5-bisphosphate + O2 = 2-phosphoglycolate + (2R)-3-phosphoglycerate + 2 H(+). RuBisCO catalyzes two reactions: the carboxylation of D-ribulose 1,5-bisphosphate, the primary event in carbon dioxide fixation, as well as the oxidative fragmentation of the pentose substrate in the photorespiration process. Both reactions occur simultaneously and in competition at the same active site. The protein is Ribulose bisphosphate carboxylase large chain (rbcL) of Euglena longa (Euglenophycean alga).